The sequence spans 338 residues: tRNA N6-adenosine threonylcarbamoyltransferase (338 aa).

Fe cation contacts are provided by H111 and H115. Residues 134 to 138 (LVSGG), D167, G180, and N272 contribute to the substrate site. Residue D300 participates in Fe cation binding.

This sequence belongs to the KAE1 / TsaD family. Fe(2+) is required as a cofactor.

The protein resides in the cytoplasm. The catalysed reaction is L-threonylcarbamoyladenylate + adenosine(37) in tRNA = N(6)-L-threonylcarbamoyladenosine(37) in tRNA + AMP + H(+). Required for the formation of a threonylcarbamoyl group on adenosine at position 37 (t(6)A37) in tRNAs that read codons beginning with adenine. Is involved in the transfer of the threonylcarbamoyl moiety of threonylcarbamoyl-AMP (TC-AMP) to the N6 group of A37, together with TsaE and TsaB. TsaD likely plays a direct catalytic role in this reaction. The chain is tRNA N6-adenosine threonylcarbamoyltransferase from Shewanella oneidensis (strain ATCC 700550 / JCM 31522 / CIP 106686 / LMG 19005 / NCIMB 14063 / MR-1).